A 102-amino-acid polypeptide reads, in one-letter code: Small ribosomal subunit protein uS10 (102 aa).

The protein belongs to the universal ribosomal protein uS10 family. Part of the 30S ribosomal subunit.

Involved in the binding of tRNA to the ribosomes. This is Small ribosomal subunit protein uS10 from Cenarchaeum symbiosum (strain A).